The chain runs to 408 residues: uncharacterized protein (408 aa).

Disordered stretches follow at residues 184–206 and 254–317; these read DENN…SILF and NNKT…SSDS. The segment covering 187 to 206 has biased composition (low complexity); it reads NNNSNNNNNNNSNNNSSILF.

This is an uncharacterized protein from Dictyostelium discoideum (Social amoeba).